Consider the following 214-residue polypeptide: External core antigen (214 aa).

Positions 1–19 (MQLFHLCLIISCTCPTFQA) are cleaved as a signal peptide. The tract at residues 25 to 27 (GWL) is HBEAG. The interval 165–214 (NAPILSTLPETTVVRRRDRGRSPRRRTPSPRRRRSQSPRRRRSQSRESQC) is disordered. The segment covering 178-207 (VRRRDRGRSPRRRTPSPRRRRSQSPRRRRS) has biased composition (basic residues). One copy of the 1; half-length repeat lies at 186 to 192 (SPRRRTP). Residues 186 to 208 (SPRRRTPSPRRRRSQSPRRRRSQ) form a 3 X 8 AA repeats of S-P-R-R-R-R-S-Q region. Positions 186-214 (SPRRRTPSPRRRRSQSPRRRRSQSRESQC) are excised as a propeptide. 2 repeat units span residues 193–200 (SPRRRRSQ) and 201–208 (SPRRRRSQ).

It belongs to the orthohepadnavirus precore antigen family. In terms of assembly, homodimerizes. In terms of processing, phosphorylated. Cleaved by host furin.

Its subcellular location is the secreted. It localises to the host nucleus. In terms of biological role, may regulate immune response to the intracellular capsid in acting as a T-cell tolerogen, by having an immunoregulatory effect which prevents destruction of infected cells by cytotoxic T-cells. This immune regulation may predispose to chronicity during perinatal infections and prevent severe liver injury during adult infections. This Homo sapiens (Human) protein is External core antigen.